Here is an 86-residue protein sequence, read N- to C-terminus: Small ribosomal subunit protein bS20 (86 aa).

A disordered region spans residues 1 to 25 (MANIKSAIKRAKTSEKRRVANSQEK).

It belongs to the bacterial ribosomal protein bS20 family.

Binds directly to 16S ribosomal RNA. The protein is Small ribosomal subunit protein bS20 of Exiguobacterium sp. (strain ATCC BAA-1283 / AT1b).